A 29-amino-acid chain; its full sequence is Probable small toxic protein BsrH (29 aa).

Residues 6-26 (FQALMLMLAFGSFIIALLTYI) traverse the membrane as a helical segment.

It is found in the cell membrane. Possible toxic component of a type I toxin-antitoxin (TA) system; an overlapping antisense RNA has been identified. This is Probable small toxic protein BsrH from Bacillus subtilis (strain 168).